Reading from the N-terminus, the 335-residue chain is Serine/threonine-protein kinase crk1 (335 aa).

The region spanning 11 to 292 is the Protein kinase domain; it reads YVKERKVGEG…AQQALEHHYF (282 aa). ATP contacts are provided by residues 17–25 and K40; that span reads VGEGTYAVV. Catalysis depends on D133, which acts as the Proton acceptor. Phosphoserine is present on S162. Position 165 is a phosphoserine; by CAK (S165). Residue S318 is modified to Phosphoserine.

It belongs to the protein kinase superfamily. CMGC Ser/Thr protein kinase family. CDC2/CDKX subfamily. One of the nine subunits forming the core-TFIIH basal transcription factor. Interacts with mcs2 and tfb3.

It is found in the cytoplasm. Its subcellular location is the nucleus. It carries out the reaction [DNA-directed RNA polymerase] + ATP = phospho-[DNA-directed RNA polymerase] + ADP + H(+). Functionally, protein kinase essential for cell proliferation, where it is required for completion of cytokinesis. Phosphorylates the C-terminal repeat domain (CTD) of RNA polymerase II. The sequence is that of Serine/threonine-protein kinase crk1 (crk1) from Schizosaccharomyces pombe (strain 972 / ATCC 24843) (Fission yeast).